The sequence spans 244 residues: Phosphoadenosine 5'-phosphosulfate reductase (244 aa).

Cys-239 functions as the Nucleophile; cysteine thiosulfonate intermediate in the catalytic mechanism.

The protein belongs to the PAPS reductase family. CysH subfamily.

The protein resides in the cytoplasm. The catalysed reaction is [thioredoxin]-disulfide + sulfite + adenosine 3',5'-bisphosphate + 2 H(+) = [thioredoxin]-dithiol + 3'-phosphoadenylyl sulfate. The protein operates within sulfur metabolism; hydrogen sulfide biosynthesis; sulfite from sulfate: step 3/3. In terms of biological role, catalyzes the formation of sulfite from phosphoadenosine 5'-phosphosulfate (PAPS) using thioredoxin as an electron donor. The chain is Phosphoadenosine 5'-phosphosulfate reductase from Yersinia enterocolitica serotype O:8 / biotype 1B (strain NCTC 13174 / 8081).